A 431-amino-acid polypeptide reads, in one-letter code: Bifunctional protein GlmU (431 aa).

The interval 1–223 is pyrophosphorylase; it reads MNLSIVILAA…EENFKGVNSK (223 aa). UDP-N-acetyl-alpha-D-glucosamine contacts are provided by residues 8-11, K22, Q74, and 81-82; these read LAAG and GT. D102 is a binding site for Mg(2+). Residues G135, E149, N164, and N221 each contribute to the UDP-N-acetyl-alpha-D-glucosamine site. Position 221 (N221) interacts with Mg(2+). Positions 224-244 are linker; the sequence is ADLAEAEAIMTGRIRRRWMRE. Residues 245 to 431 form an N-acetyltransferase region; that stretch reads GVRMRLPETI…FFARYFSSSK (187 aa). UDP-N-acetyl-alpha-D-glucosamine contacts are provided by R308 and K325. The active-site Proton acceptor is the H336. The UDP-N-acetyl-alpha-D-glucosamine site is built by Y339 and N350. Acetyl-CoA contacts are provided by residues A353, 359-360, S378, A396, and R413; that span reads NY.

It in the N-terminal section; belongs to the N-acetylglucosamine-1-phosphate uridyltransferase family. This sequence in the C-terminal section; belongs to the transferase hexapeptide repeat family. As to quaternary structure, homotrimer. It depends on Mg(2+) as a cofactor.

It localises to the cytoplasm. The catalysed reaction is alpha-D-glucosamine 1-phosphate + acetyl-CoA = N-acetyl-alpha-D-glucosamine 1-phosphate + CoA + H(+). It carries out the reaction N-acetyl-alpha-D-glucosamine 1-phosphate + UTP + H(+) = UDP-N-acetyl-alpha-D-glucosamine + diphosphate. It participates in nucleotide-sugar biosynthesis; UDP-N-acetyl-alpha-D-glucosamine biosynthesis; N-acetyl-alpha-D-glucosamine 1-phosphate from alpha-D-glucosamine 6-phosphate (route II): step 2/2. It functions in the pathway nucleotide-sugar biosynthesis; UDP-N-acetyl-alpha-D-glucosamine biosynthesis; UDP-N-acetyl-alpha-D-glucosamine from N-acetyl-alpha-D-glucosamine 1-phosphate: step 1/1. The protein operates within bacterial outer membrane biogenesis; LPS lipid A biosynthesis. Its function is as follows. Catalyzes the last two sequential reactions in the de novo biosynthetic pathway for UDP-N-acetylglucosamine (UDP-GlcNAc). The C-terminal domain catalyzes the transfer of acetyl group from acetyl coenzyme A to glucosamine-1-phosphate (GlcN-1-P) to produce N-acetylglucosamine-1-phosphate (GlcNAc-1-P), which is converted into UDP-GlcNAc by the transfer of uridine 5-monophosphate (from uridine 5-triphosphate), a reaction catalyzed by the N-terminal domain. This is Bifunctional protein GlmU from Wolinella succinogenes (strain ATCC 29543 / DSM 1740 / CCUG 13145 / JCM 31913 / LMG 7466 / NCTC 11488 / FDC 602W) (Vibrio succinogenes).